A 420-amino-acid polypeptide reads, in one-letter code: Reticulon-4 receptor-like 2 (420 aa).

Residues 1 to 30 (MLPGLRRLLQGPASACLLLTLLALPPVTPS) form the signal peptide. Cystine bridges form between C31/C37 and C35/C46. Residues 31 to 60 (CPMLCTCYSSPPTVSCQANNFSSVPLSLPP) enclose the LRRNT domain. N50 is a glycosylation site (N-linked (GlcNAc...) asparagine). LRR repeat units lie at residues 61-82 (STQR…TFGP), 83-104 (NLLT…TFRH), 107-129 (ALEE…TFQG), 132-153 (RLQS…IFRG), 156-177 (SLQY…LFAD), 180-201 (NLSH…VFRG), 204-225 (SLDR…AFHG), and 228-249 (RLTI…ALAD). Residue N93 is glycosylated (N-linked (GlcNAc...) asparagine). The N-linked (GlcNAc...) asparagine glycan is linked to N236. Positions 261 to 312 (NPWACDCRARPLWAWFQRARVSSSDVTCATPPERQGRDLRTLRDTDFQACPP) constitute an LRRCT domain. Cystine bridges form between C265–C288 and C267–C310. The interval 286–390 (VTCATPPERQ…GEQTCPGAAC (105 aa)) is disordered. A compositionally biased stretch (basic and acidic residues) spans 294–306 (RQGRDLRTLRDTD). The important for interaction with MAG stretch occupies residues 315-327 (PTRPGSRARGNSS). Positions 351 to 360 (LPAEDSRGRQ) are enriched in basic and acidic residues. C390 carries the GPI-anchor amidated cysteine lipid modification. A propeptide spans 391–420 (QAPADSRGPVLSAGLRTPLLCLLLLAPHHL) (removed in mature form).

Belongs to the Nogo receptor family. Interaction with MAG is controversial, and may be indirect. Interacts with MAG. Does not interact with OMG and RTN4. In terms of processing, undergoes zinc metalloproteinase-mediated ectodomain shedding in neuroblastoma cells; is released both as a full-length ectodomain and an N-terminal fragment containing the leucine-rich repeat (LRR) region of the protein. Post-translationally, N-glycosylated. O-glycosylated. Contains terminal sialic acid groups on its glycan chains. In terms of tissue distribution, detected in adult brain, in neocortex, hippocampus, striatum and dorsal root ganglion neurons, and in retina (at protein level). In brain, detected in cerebral cortex and hippocampus. Weak or no expression detected in the cerebellum, thalamus or striatum.

It localises to the cell membrane. The protein localises to the cell projection. The protein resides in the dendrite. It is found in the perikaryon. Its subcellular location is the axon. It localises to the membrane raft. Its function is as follows. Cell surface receptor that plays a functionally redundant role in the inhibition of neurite outgrowth mediated by MAG. Plays a functionally redundant role in postnatal brain development. Contributes to normal axon migration across the brain midline and normal formation of the corpus callosum. Does not seem to play a significant role in regulating axon regeneration in the adult central nervous system. Protects motoneurons against apoptosis; protection against apoptosis is probably mediated by MAG. Like other family members, plays a role in restricting the number dendritic spines and the number of synapses that are formed during brain development. Signaling mediates activation of Rho and downstream reorganization of the actin cytoskeleton. The sequence is that of Reticulon-4 receptor-like 2 from Rattus norvegicus (Rat).